The chain runs to 295 residues: Bifunctional protein FolD (295 aa).

Residues Gly166–Ser168, Ser191, and Ile232 each bind NADP(+).

It belongs to the tetrahydrofolate dehydrogenase/cyclohydrolase family. In terms of assembly, homodimer.

It catalyses the reaction (6R)-5,10-methylene-5,6,7,8-tetrahydrofolate + NADP(+) = (6R)-5,10-methenyltetrahydrofolate + NADPH. The catalysed reaction is (6R)-5,10-methenyltetrahydrofolate + H2O = (6R)-10-formyltetrahydrofolate + H(+). It participates in one-carbon metabolism; tetrahydrofolate interconversion. Functionally, catalyzes the oxidation of 5,10-methylenetetrahydrofolate to 5,10-methenyltetrahydrofolate and then the hydrolysis of 5,10-methenyltetrahydrofolate to 10-formyltetrahydrofolate. This Rhodopseudomonas palustris (strain BisB18) protein is Bifunctional protein FolD.